The primary structure comprises 202 residues: ATP-dependent Clp protease proteolytic subunit (202 aa).

Ser107 functions as the Nucleophile in the catalytic mechanism. His132 is an active-site residue.

The protein belongs to the peptidase S14 family. Fourteen ClpP subunits assemble into 2 heptameric rings which stack back to back to give a disk-like structure with a central cavity, resembling the structure of eukaryotic proteasomes.

The protein resides in the cytoplasm. The enzyme catalyses Hydrolysis of proteins to small peptides in the presence of ATP and magnesium. alpha-casein is the usual test substrate. In the absence of ATP, only oligopeptides shorter than five residues are hydrolyzed (such as succinyl-Leu-Tyr-|-NHMec, and Leu-Tyr-Leu-|-Tyr-Trp, in which cleavage of the -Tyr-|-Leu- and -Tyr-|-Trp bonds also occurs).. Functionally, cleaves peptides in various proteins in a process that requires ATP hydrolysis. Has a chymotrypsin-like activity. Plays a major role in the degradation of misfolded proteins. The chain is ATP-dependent Clp protease proteolytic subunit from Shewanella amazonensis (strain ATCC BAA-1098 / SB2B).